A 104-amino-acid chain; its full sequence is Gastrin (104 aa).

The first 21 residues, 1–21 (MQRLCVYVLILALALATFSEA), serve as a signal peptide directing secretion. Positions 22–58 (SWKPRSRLQDAPSGPGANRGLEPHGLDQLGPASHHRR) are excised as a propeptide. Positions 22–70 (SWKPRSRLQDAPSGPGANRGLEPHGLDQLGPASHHRRQLGLQGPPQLVA) are disordered. Glutamine 59 and glutamine 76 each carry pyrrolidone carboxylic acid. Tyrosine 87 is modified (sulfotyrosine). A Phenylalanine amide modification is found at phenylalanine 92. Residue serine 96 is modified to Phosphoserine. The propeptide occupies 96–104 (SAEEGDQRP).

Belongs to the gastrin/cholecystokinin family.

The protein resides in the secreted. In terms of biological role, gastrin stimulates the stomach mucosa to produce and secrete hydrochloric acid and the pancreas to secrete its digestive enzymes. It also stimulates smooth muscle contraction and increases blood circulation and water secretion in the stomach and intestine. In Canis lupus familiaris (Dog), this protein is Gastrin (GAST).